A 248-amino-acid chain; its full sequence is MAADPIHQFQITKLFSLGHIGGQEIAFTNSSAYMFAAVAIIAVMMLAPGRQLVPGRFQSVAELSYEFVANMIRSTAGKEGLKFFPLVFSLFMFIAVSNLVGIIPYTFTVSSHLIVTVTLAMLVFVTVLVYGLAKNGLKFFKLFVPSGVPIYILPLVVFIEVISFFLKPVSHSVRLFANMLAGHIALKVFASFIAMLGALGVVGWVGAVLPLGLTIALTALELLVAFLQAYVFAILTCIYLNDAIHPGH.

The next 6 helical transmembrane spans lie at 25–45 (IAFTNSSAYMFAAVAIIAVMM), 83–103 (FFPLVFSLFMFIAVSNLVGII), 113–133 (LIVTVTLAMLVFVTVLVYGLA), 142–162 (LFVPSGVPIYILPLVVFIEVI), 192–212 (FIAMLGALGVVGWVGAVLPLG), and 215–235 (IALTALELLVAFLQAYVFAIL).

It belongs to the ATPase A chain family. As to quaternary structure, F-type ATPases have 2 components, CF(1) - the catalytic core - and CF(0) - the membrane proton channel. CF(1) has five subunits: alpha(3), beta(3), gamma(1), delta(1), epsilon(1). CF(0) has four main subunits: a, b, b' and c.

The protein resides in the cell inner membrane. Key component of the proton channel; it plays a direct role in the translocation of protons across the membrane. This is ATP synthase subunit a from Rhodopseudomonas palustris (strain HaA2).